The primary structure comprises 114 residues: Large ribosomal subunit protein uL22 (114 aa).

It belongs to the universal ribosomal protein uL22 family. Part of the 50S ribosomal subunit.

This protein binds specifically to 23S rRNA; its binding is stimulated by other ribosomal proteins, e.g. L4, L17, and L20. It is important during the early stages of 50S assembly. It makes multiple contacts with different domains of the 23S rRNA in the assembled 50S subunit and ribosome. In terms of biological role, the globular domain of the protein is located near the polypeptide exit tunnel on the outside of the subunit, while an extended beta-hairpin is found that lines the wall of the exit tunnel in the center of the 70S ribosome. The sequence is that of Large ribosomal subunit protein uL22 from Alcanivorax borkumensis (strain ATCC 700651 / DSM 11573 / NCIMB 13689 / SK2).